We begin with the raw amino-acid sequence, 289 residues long: Dehydrodolichyl diphosphate synthase 4 (289 aa).

The chain crosses the membrane as a helical span at residues 2–22 (LSMLWFLLSLLSLLLLPCLRP).

It belongs to the UPP synthase family. It depends on Mg(2+) as a cofactor.

The protein localises to the endoplasmic reticulum membrane. Its pathway is protein modification; protein glycosylation. Catalyzes cis-prenyl chain elongation to produce the polyprenyl backbone of dolichol, a glycosyl carrier-lipid required for the biosynthesis of several classes of glycoprotein. The polypeptide is Dehydrodolichyl diphosphate synthase 4 (Arabidopsis thaliana (Mouse-ear cress)).